Consider the following 174-residue polypeptide: Co-chaperone protein HscB homolog (174 aa).

The 73-residue stretch at 2–74 (NYFELFKFSP…IRRAEHMLSL (73 aa)) folds into the J domain.

It belongs to the HscB family. As to quaternary structure, interacts with HscA and stimulates its ATPase activity.

Functionally, co-chaperone involved in the maturation of iron-sulfur cluster-containing proteins. Seems to help targeting proteins to be folded toward HscA. In Shewanella sp. (strain MR-4), this protein is Co-chaperone protein HscB homolog.